Here is a 481-residue protein sequence, read N- to C-terminus: UDP-N-acetylmuramoyl-L-alanyl-D-glutamate--L-lysine ligase (481 aa).

Serine 42 is a UDP-N-acetyl-alpha-D-muramoyl-L-alanyl-D-glutamate binding site. Position 118–124 (118–124 (GTKGKTT)) interacts with ATP. UDP-N-acetyl-alpha-D-muramoyl-L-alanyl-D-glutamate contacts are provided by residues glutamine 158, 160–161 (TT), serine 187, and arginine 195. Residue lysine 229 is modified to N6-carboxylysine. The short motif at 404–407 (DDPN) is the L-lysine recognition motif element.

This sequence belongs to the MurCDEF family. MurE subfamily. In terms of processing, carboxylation is probably crucial for Mg(2+) binding and, consequently, for the gamma-phosphate positioning of ATP.

It localises to the cytoplasm. The catalysed reaction is UDP-N-acetyl-alpha-D-muramoyl-L-alanyl-D-glutamate + L-lysine + ATP = UDP-N-acetyl-alpha-D-muramoyl-L-alanyl-gamma-D-glutamyl-L-lysine + ADP + phosphate + H(+). It functions in the pathway cell wall biogenesis; peptidoglycan biosynthesis. Functionally, catalyzes the addition of L-lysine to the nucleotide precursor UDP-N-acetylmuramoyl-L-alanyl-D-glutamate (UMAG) in the biosynthesis of bacterial cell-wall peptidoglycan. In Streptococcus pyogenes serotype M6 (strain ATCC BAA-946 / MGAS10394), this protein is UDP-N-acetylmuramoyl-L-alanyl-D-glutamate--L-lysine ligase.